The primary structure comprises 141 residues: Acetyltransferase YpeA (141 aa).

The N-acetyltransferase domain maps to 1–141; the sequence is MEIRVFRQED…GKRLIEDEEY (141 aa).

The protein belongs to the acetyltransferase family. YpeA subfamily.

This is Acetyltransferase YpeA from Salmonella choleraesuis (strain SC-B67).